The primary structure comprises 315 residues: Methionyl-tRNA formyltransferase (315 aa).

The tract at residues 2–189 (SESLRIIFAG…LITTLKQLAD (188 aa)) is N-terminal domain. 113–116 (SLLP) provides a ligand contact to (6S)-5,6,7,8-tetrahydrofolate. Residues 210–315 (KEEARIDWSL…EWFVPGNRLV (106 aa)) are C-terminal domain.

This sequence belongs to the Fmt family. In terms of assembly, monomer.

It catalyses the reaction L-methionyl-tRNA(fMet) + (6R)-10-formyltetrahydrofolate = N-formyl-L-methionyl-tRNA(fMet) + (6S)-5,6,7,8-tetrahydrofolate + H(+). Its activity is regulated as follows. Activity is optimum in the presence of Mg(2+) and K(+). Functionally, attaches a formyl group to the free amino group of methionyl-tRNA(fMet). The formyl group appears to play a dual role in the initiator identity of N-formylmethionyl-tRNA by promoting its recognition by IF2 and preventing the misappropriation of this tRNA by the elongation apparatus. This is Methionyl-tRNA formyltransferase from Escherichia coli (strain K12).